Here is a 239-residue protein sequence, read N- to C-terminus: MIKVLIVDDEPLARENLRILLQGQDDIEIVGECANAVEAIGAVHKLRPDVLFLDIQMPRISGLEIVGMLDPEHRPYIVFLTAFDEYAIKAFEEHAFDYLLKPIEEKRLEKTLHRLRQERSKQDVSLLPENQQALKFIPCTGHSRIYLLQMDDVAFVSSRMSGVYVTSSEGKEGFTELTLRTLESRTPLLRCHRQFLVNMAHLQEIRLEDNGQAELILRNGLTVPVSRRYLKSLKEAIGL.

A Response regulatory domain is found at 3–116; the sequence is KVLIVDDEPL…RLEKTLHRLR (114 aa). Asp54 carries the 4-aspartylphosphate modification. Residues 137 to 239 form the HTH LytTR-type domain; it reads IPCTGHSRIY…LKSLKEAIGL (103 aa).

Phosphorylated by BtsS.

Member of the two-component regulatory system BtsS/BtsR. BtsR regulates expression of btsT by binding to its promoter region. This is Transcriptional regulatory protein BtsR from Salmonella typhi.